A 61-amino-acid chain; its full sequence is Large ribosomal subunit protein uL30 (61 aa).

This sequence belongs to the universal ribosomal protein uL30 family. In terms of assembly, part of the 50S ribosomal subunit.

In Shewanella halifaxensis (strain HAW-EB4), this protein is Large ribosomal subunit protein uL30.